Consider the following 155-residue polypeptide: Small ribosomal subunit protein uS7 (155 aa).

This sequence belongs to the universal ribosomal protein uS7 family. In terms of assembly, part of the 30S ribosomal subunit. Contacts proteins S9 and S11.

Functionally, one of the primary rRNA binding proteins, it binds directly to 16S rRNA where it nucleates assembly of the head domain of the 30S subunit. Is located at the subunit interface close to the decoding center, probably blocks exit of the E-site tRNA. The protein is Small ribosomal subunit protein uS7 of Amoebophilus asiaticus (strain 5a2).